A 688-amino-acid polypeptide reads, in one-letter code: Glycine--tRNA ligase beta subunit (688 aa).

The protein belongs to the class-II aminoacyl-tRNA synthetase family. Tetramer of two alpha and two beta subunits.

It localises to the cytoplasm. The enzyme catalyses tRNA(Gly) + glycine + ATP = glycyl-tRNA(Gly) + AMP + diphosphate. The sequence is that of Glycine--tRNA ligase beta subunit from Shewanella sp. (strain ANA-3).